Consider the following 299-residue polypeptide: UDP-3-O-acyl-N-acetylglucosamine deacetylase (299 aa).

His-75, His-232, and Asp-236 together coordinate Zn(2+). His-259 (proton donor) is an active-site residue.

Belongs to the LpxC family. Zn(2+) is required as a cofactor.

It catalyses the reaction a UDP-3-O-[(3R)-3-hydroxyacyl]-N-acetyl-alpha-D-glucosamine + H2O = a UDP-3-O-[(3R)-3-hydroxyacyl]-alpha-D-glucosamine + acetate. It participates in glycolipid biosynthesis; lipid IV(A) biosynthesis; lipid IV(A) from (3R)-3-hydroxytetradecanoyl-[acyl-carrier-protein] and UDP-N-acetyl-alpha-D-glucosamine: step 2/6. Functionally, catalyzes the hydrolysis of UDP-3-O-myristoyl-N-acetylglucosamine to form UDP-3-O-myristoylglucosamine and acetate, the committed step in lipid A biosynthesis. The chain is UDP-3-O-acyl-N-acetylglucosamine deacetylase from Helicobacter hepaticus (strain ATCC 51449 / 3B1).